A 216-amino-acid chain; its full sequence is Adenylate kinase (216 aa).

Residue 13-18 (GAGKGT) coordinates ATP. Residues 33 to 66 (TTGDALRANKTKDITHLDVEYDTPGAYMDAGELV) form an NMP region. AMP contacts are provided by residues T34, R39, 64–66 (ELV), 89–92 (GYPR), and Q96. Residues 125–162 (GRRVCEDCGATFHVSFNQPETEGVCDACGGSLYQREDD) form an LID region. R126 is an ATP binding site. Zn(2+) contacts are provided by C129 and C132. Residue 135 to 136 (TF) participates in ATP binding. Zn(2+)-binding residues include C149 and C152. Residues R159 and R170 each contribute to the AMP site. R198 is an ATP binding site.

Belongs to the adenylate kinase family. Monomer.

It is found in the cytoplasm. It catalyses the reaction AMP + ATP = 2 ADP. Its pathway is purine metabolism; AMP biosynthesis via salvage pathway; AMP from ADP: step 1/1. Functionally, catalyzes the reversible transfer of the terminal phosphate group between ATP and AMP. Plays an important role in cellular energy homeostasis and in adenine nucleotide metabolism. The protein is Adenylate kinase of Halobacterium salinarum (strain ATCC 700922 / JCM 11081 / NRC-1) (Halobacterium halobium).